Reading from the N-terminus, the 805-residue chain is Phenylalanine--tRNA ligase beta subunit (805 aa).

The tRNA-binding domain maps to 39–148 (APPFTGVVVA…AALRPGTDIR (110 aa)). The region spanning 399-474 (PVREPVRMRL…RVYGFERIPD (76 aa)) is the B5 domain. Mg(2+) contacts are provided by Asp452, Asp458, Glu461, and Glu462. One can recognise an FDX-ACB domain in the interval 703–804 (SRQPAVVRDL…LVAAHNARQR (102 aa)).

It belongs to the phenylalanyl-tRNA synthetase beta subunit family. Type 1 subfamily. In terms of assembly, tetramer of two alpha and two beta subunits. It depends on Mg(2+) as a cofactor.

It is found in the cytoplasm. The catalysed reaction is tRNA(Phe) + L-phenylalanine + ATP = L-phenylalanyl-tRNA(Phe) + AMP + diphosphate + H(+). The polypeptide is Phenylalanine--tRNA ligase beta subunit (Bordetella bronchiseptica (strain ATCC BAA-588 / NCTC 13252 / RB50) (Alcaligenes bronchisepticus)).